The sequence spans 212 residues: MRGLVRLGLTGGIGSGKSTVAGLLAELGAAVVDADAIARHLTAPNGPAIASIAATFGPDFITSTGAMDREKMRALAYADITARQRLEAIIHPLVRQETQRQTLLAANQGHPCIVFDVPLLVESTTWREKLDWVLVVDCTPATQISRVMARNALTRDEVEKIIASQASRRHRLNAADAVIFNDSLSLGALALEVDEVARHFGLSCQPLSPNQK.

One can recognise a DPCK domain in the interval 6-211; the sequence is RLGLTGGIGS…LSCQPLSPNQ (206 aa). 14–19 is an ATP binding site; that stretch reads GSGKST.

This sequence belongs to the CoaE family.

The protein resides in the cytoplasm. The catalysed reaction is 3'-dephospho-CoA + ATP = ADP + CoA + H(+). Its pathway is cofactor biosynthesis; coenzyme A biosynthesis; CoA from (R)-pantothenate: step 5/5. Catalyzes the phosphorylation of the 3'-hydroxyl group of dephosphocoenzyme A to form coenzyme A. The protein is Dephospho-CoA kinase of Albidiferax ferrireducens (strain ATCC BAA-621 / DSM 15236 / T118) (Rhodoferax ferrireducens).